The primary structure comprises 119 residues: Non-specific lipid-transfer protein 11 (119 aa).

The N-terminal stretch at 1–28 (MRNITTTTRKMLLLVITILLGIAYHGEA) is a signal peptide. 4 disulfides stabilise this stretch: Cys-31-Cys-78, Cys-41-Cys-55, Cys-56-Cys-101, and Cys-76-Cys-115.

This sequence belongs to the plant LTP family.

Its function is as follows. Plant non-specific lipid-transfer proteins transfer phospholipids as well as galactolipids across membranes. May play a role in wax or cutin deposition in the cell walls of expanding epidermal cells and certain secretory tissues. The chain is Non-specific lipid-transfer protein 11 (LTP11) from Arabidopsis thaliana (Mouse-ear cress).